The sequence spans 658 residues: Protein CFAP20DC (658 aa).

Disordered stretches follow at residues 312-522 (QQGE…EEEY) and 589-634 (PVNQ…LDSS). The segment covering 319 to 328 (SHPVKQTTPL) has biased composition (polar residues). The segment covering 339–349 (PPRDPSADKGS) has biased composition (basic and acidic residues). Composition is skewed to low complexity over residues 351 to 363 (RRGLGLRSSSGSR) and 417 to 434 (SSGPPSGAAGSSSSLLLD). A compositionally biased stretch (basic and acidic residues) spans 494–506 (DPKEDSRVTKGDT). Residues 507-521 (ELEDDFYGSDSSEEE) show a composition bias toward acidic residues. The span at 625–634 (QPLEQSLDSS) shows a compositional bias: polar residues.

The protein is Protein CFAP20DC of Rattus norvegicus (Rat).